A 508-amino-acid chain; its full sequence is ATP synthase subunit alpha, mitochondrial (508 aa).

171–178 (GDRQTGKT) is a binding site for ATP.

Belongs to the ATPase alpha/beta chains family. In terms of assembly, F-type ATPases have 2 components, CF(1) - the catalytic core - and CF(0) - the membrane proton channel. CF(1) has five subunits: alpha(3), beta(3), gamma(1), delta(1), epsilon(1). CF(0) has three main subunits: a, b and c.

It is found in the mitochondrion. The protein localises to the mitochondrion inner membrane. Its function is as follows. Mitochondrial membrane ATP synthase (F(1)F(0) ATP synthase or Complex V) produces ATP from ADP in the presence of a proton gradient across the membrane which is generated by electron transport complexes of the respiratory chain. F-type ATPases consist of two structural domains, F(1) - containing the extramembraneous catalytic core, and F(0) - containing the membrane proton channel, linked together by a central stalk and a peripheral stalk. During catalysis, ATP synthesis in the catalytic domain of F(1) is coupled via a rotary mechanism of the central stalk subunits to proton translocation. Subunits alpha and beta form the catalytic core in F(1). Rotation of the central stalk against the surrounding alpha(3)beta(3) subunits leads to hydrolysis of ATP in three separate catalytic sites on the beta subunits. Subunit alpha does not bear the catalytic high-affinity ATP-binding sites. In Phaseolus vulgaris (Kidney bean), this protein is ATP synthase subunit alpha, mitochondrial (ATPA).